The chain runs to 203 residues: Holliday junction branch migration complex subunit RuvA (203 aa).

The segment at 1–63 (MIGQLSGKVD…EEHIHLYGFL (63 aa)) is domain I. The interval 64–142 (NLEEKIFFNL…KISSGSAIIK (79 aa)) is domain II. Positions 143–149 (ESLNIKH) are flexible linker. Positions 150–203 (ITPVASNEVIKALVNLGFSRFEAQNAVQGIITQNPEISIDELIKTALKNRNSNF) are domain III.

This sequence belongs to the RuvA family. Homotetramer. Forms an RuvA(8)-RuvB(12)-Holliday junction (HJ) complex. HJ DNA is sandwiched between 2 RuvA tetramers; dsDNA enters through RuvA and exits via RuvB. An RuvB hexamer assembles on each DNA strand where it exits the tetramer. Each RuvB hexamer is contacted by two RuvA subunits (via domain III) on 2 adjacent RuvB subunits; this complex drives branch migration. In the full resolvosome a probable DNA-RuvA(4)-RuvB(12)-RuvC(2) complex forms which resolves the HJ.

Its subcellular location is the cytoplasm. The RuvA-RuvB-RuvC complex processes Holliday junction (HJ) DNA during genetic recombination and DNA repair, while the RuvA-RuvB complex plays an important role in the rescue of blocked DNA replication forks via replication fork reversal (RFR). RuvA specifically binds to HJ cruciform DNA, conferring on it an open structure. The RuvB hexamer acts as an ATP-dependent pump, pulling dsDNA into and through the RuvAB complex. HJ branch migration allows RuvC to scan DNA until it finds its consensus sequence, where it cleaves and resolves the cruciform DNA. The protein is Holliday junction branch migration complex subunit RuvA of Rickettsia africae (strain ESF-5).